A 141-amino-acid polypeptide reads, in one-letter code: uncharacterized protein (141 aa).

This is an uncharacterized protein from Arabidopsis thaliana (Mouse-ear cress).